Reading from the N-terminus, the 237-residue chain is tRNA (guanine-N(1)-)-methyltransferase (237 aa).

Residues glycine 113 and 133 to 138 contribute to the S-adenosyl-L-methionine site; that span reads MGDYIL.

The protein belongs to the RNA methyltransferase TrmD family. As to quaternary structure, homodimer.

It is found in the cytoplasm. The catalysed reaction is guanosine(37) in tRNA + S-adenosyl-L-methionine = N(1)-methylguanosine(37) in tRNA + S-adenosyl-L-homocysteine + H(+). In terms of biological role, specifically methylates guanosine-37 in various tRNAs. The polypeptide is tRNA (guanine-N(1)-)-methyltransferase (Wolinella succinogenes (strain ATCC 29543 / DSM 1740 / CCUG 13145 / JCM 31913 / LMG 7466 / NCTC 11488 / FDC 602W) (Vibrio succinogenes)).